A 622-amino-acid chain; its full sequence is UvrABC system protein C (622 aa).

Positions 13-92 (DKPGVYLMKN…IKENRPKYNV (80 aa)) constitute a GIY-YIG domain. One can recognise a UVR domain in the interval 205–240 (DELIKKIEEKMKRAAEKMDFEGAAHYRDQRQALLDI).

This sequence belongs to the UvrC family. In terms of assembly, interacts with UvrB in an incision complex.

It localises to the cytoplasm. Functionally, the UvrABC repair system catalyzes the recognition and processing of DNA lesions. UvrC both incises the 5' and 3' sides of the lesion. The N-terminal half is responsible for the 3' incision and the C-terminal half is responsible for the 5' incision. The polypeptide is UvrABC system protein C (Alkaliphilus metalliredigens (strain QYMF)).